The chain runs to 411 residues: Lissencephaly-1 homolog (411 aa).

The 33-residue stretch at 9 to 41 folds into the LisH domain; sequence QREELNQAIADYLGSNGYGDSLETFRKEADVST. The stretch at 56–83 forms a coiled coil; the sequence is TSVIRLQKKVMELEAKLTEAEKEVIEGA. WD repeat units follow at residues 106–147, 148–187, 191–230, 233–272, 275–334, 337–376, and 379–411; these read GHRA…RSLK, GHTD…ECVK, GHDH…CVKT, GHRE…CKVE, DHEH…CLLT, GHDN…CMKT, and AHQH…WECR.

The protein belongs to the WD repeat LIS1/nudF family.

The protein localises to the cytoplasm. It localises to the cytoskeleton. Its subcellular location is the microtubule organizing center. The protein resides in the centrosome. Positively regulates the activity of the minus-end directed microtubule motor protein dynein. May enhance dynein-mediated microtubule sliding by targeting dynein to the microtubule plus end. Required for several dynein- and microtubule-dependent processes. The chain is Lissencephaly-1 homolog from Drosophila persimilis (Fruit fly).